Reading from the N-terminus, the 406-residue chain is 8-amino-7-oxononanoate synthase (406 aa).

Arg-21 is a substrate binding site. 112–113 (GY) is a pyridoxal 5'-phosphate binding site. Residue His-137 coordinates substrate. Pyridoxal 5'-phosphate contacts are provided by Ser-183, His-211, and Thr-239. Lys-242 carries the post-translational modification N6-(pyridoxal phosphate)lysine. Thr-358 contacts substrate.

Belongs to the class-II pyridoxal-phosphate-dependent aminotransferase family. BioF subfamily. As to quaternary structure, homodimer. Requires pyridoxal 5'-phosphate as cofactor.

It catalyses the reaction 6-carboxyhexanoyl-[ACP] + L-alanine + H(+) = (8S)-8-amino-7-oxononanoate + holo-[ACP] + CO2. Its pathway is cofactor biosynthesis; biotin biosynthesis. Functionally, catalyzes the decarboxylative condensation of pimeloyl-[acyl-carrier protein] and L-alanine to produce 8-amino-7-oxononanoate (AON), [acyl-carrier protein], and carbon dioxide. The chain is 8-amino-7-oxononanoate synthase from Burkholderia orbicola (strain MC0-3).